The following is a 286-amino-acid chain: Probable syntaxin-7B (286 aa).

Residues 1 to 257 (MTDRQPLISK…YVYKSSYRKK (257 aa)) lie on the Cytoplasmic side of the membrane. Positions 97-107 (LSTSNKKESSH) are enriched in basic and acidic residues. The disordered stretch occupies residues 97–160 (LSTSNKKESS…TNNNNNNNNN (64 aa)). The span at 114 to 160 (QQQQQQQNNGNSNNNGYNTRGGYNQQQQQQQQQYNDYTNNNNNNNNN) shows a compositional bias: low complexity. One can recognise a t-SNARE coiled-coil homology domain in the interval 185–247 (NRILDERNAN…EDAVVELEKA (63 aa)). The helical; Anchor for type IV membrane protein transmembrane segment at 258–278 (MIIFVICLLVTLVAVGIFLAI) threads the bilayer. The Vesicular segment spans residues 279–286 (YYGVIKKK).

The protein belongs to the syntaxin family.

It is found in the membrane. This chain is Probable syntaxin-7B (syn7B), found in Dictyostelium discoideum (Social amoeba).